A 157-amino-acid chain; its full sequence is Cyclic pyranopterin monophosphate synthase (157 aa).

Substrate-binding positions include 74–76 and 111–112; these read MCH and ME. Asp126 is a catalytic residue.

It belongs to the MoaC family. In terms of assembly, homohexamer; trimer of dimers.

The catalysed reaction is (8S)-3',8-cyclo-7,8-dihydroguanosine 5'-triphosphate = cyclic pyranopterin phosphate + diphosphate. The protein operates within cofactor biosynthesis; molybdopterin biosynthesis. In terms of biological role, catalyzes the conversion of (8S)-3',8-cyclo-7,8-dihydroguanosine 5'-triphosphate to cyclic pyranopterin monophosphate (cPMP). In Carboxydothermus hydrogenoformans (strain ATCC BAA-161 / DSM 6008 / Z-2901), this protein is Cyclic pyranopterin monophosphate synthase.